The primary structure comprises 187 residues: Acireductone dioxygenase 4 (187 aa).

N-acetylalanine is present on A2. 4 residues coordinate Fe(2+): H89, H91, E95, and H134. Ni(2+) is bound by residues H89, H91, E95, and H134.

This sequence belongs to the acireductone dioxygenase (ARD) family. The cofactor is Fe(2+). Ni(2+) is required as a cofactor.

The protein localises to the cytoplasm. It is found in the nucleus. The enzyme catalyses 1,2-dihydroxy-5-(methylsulfanyl)pent-1-en-3-one + O2 = 4-methylsulfanyl-2-oxobutanoate + formate + 2 H(+). The catalysed reaction is 1,2-dihydroxy-5-(methylsulfanyl)pent-1-en-3-one + O2 = 3-(methylsulfanyl)propanoate + CO + formate + 2 H(+). Its pathway is amino-acid biosynthesis; L-methionine biosynthesis via salvage pathway; L-methionine from S-methyl-5-thio-alpha-D-ribose 1-phosphate: step 5/6. Its function is as follows. Catalyzes 2 different reactions between oxygen and the acireductone 1,2-dihydroxy-3-keto-5-methylthiopentene (DHK-MTPene) depending upon the metal bound in the active site. Fe-containing acireductone dioxygenase (Fe-ARD) produces formate and 2-keto-4-methylthiobutyrate (KMTB), the alpha-ketoacid precursor of methionine in the methionine recycle pathway. Ni-containing acireductone dioxygenase (Ni-ARD) produces methylthiopropionate, carbon monoxide and formate, and does not lie on the methionine recycle pathway. In Arabidopsis thaliana (Mouse-ear cress), this protein is Acireductone dioxygenase 4 (ARD4).